A 139-amino-acid polypeptide reads, in one-letter code: Large ribosomal subunit protein uL16c (139 aa).

The disordered stretch occupies residues 1 to 20 (MLSPKRTKYRKHHRGRMKGK).

This sequence belongs to the universal ribosomal protein uL16 family. As to quaternary structure, part of the 50S ribosomal subunit.

The protein resides in the plastid. Its subcellular location is the chloroplast. In Pleurastrum terricola (Filamentous green alga), this protein is Large ribosomal subunit protein uL16c.